The following is a 584-amino-acid chain: ATP-dependent lipid A-core flippase 2 (584 aa).

6 helical membrane passes run isoleucine 32–phenylalanine 52, threonine 68–phenylalanine 88, serine 146–valine 166, tyrosine 167–isoleucine 187, alanine 254–leucine 274, and valine 280–leucine 300. The ABC transmembrane type-1 domain maps to phenylalanine 33–lysine 315. In terms of domain architecture, ABC transporter spans isoleucine 347–serine 583. Glycine 381–serine 388 lines the ATP pocket.

Belongs to the ABC transporter superfamily. Lipid exporter (TC 3.A.1.106) family. Homodimer.

The protein resides in the cell inner membrane. It carries out the reaction ATP + H2O + lipid A-core oligosaccharideSide 1 = ADP + phosphate + lipid A-core oligosaccharideSide 2.. In terms of biological role, involved in lipopolysaccharide (LPS) biosynthesis. Translocates lipid A-core from the inner to the outer leaflet of the inner membrane. Transmembrane domains (TMD) form a pore in the inner membrane and the ATP-binding domain (NBD) is responsible for energy generation. This Colwellia psychrerythraea (strain 34H / ATCC BAA-681) (Vibrio psychroerythus) protein is ATP-dependent lipid A-core flippase 2.